The chain runs to 195 residues: ATP-dependent Clp protease proteolytic subunit (195 aa).

Residue Ser-98 is the Nucleophile of the active site. His-123 is a catalytic residue.

The protein belongs to the peptidase S14 family. Fourteen ClpP subunits assemble into 2 heptameric rings which stack back to back to give a disk-like structure with a central cavity, resembling the structure of eukaryotic proteasomes.

Its subcellular location is the cytoplasm. It carries out the reaction Hydrolysis of proteins to small peptides in the presence of ATP and magnesium. alpha-casein is the usual test substrate. In the absence of ATP, only oligopeptides shorter than five residues are hydrolyzed (such as succinyl-Leu-Tyr-|-NHMec, and Leu-Tyr-Leu-|-Tyr-Trp, in which cleavage of the -Tyr-|-Leu- and -Tyr-|-Trp bonds also occurs).. In terms of biological role, cleaves peptides in various proteins in a process that requires ATP hydrolysis. Has a chymotrypsin-like activity. Plays a major role in the degradation of misfolded proteins. This is ATP-dependent Clp protease proteolytic subunit from Wolinella succinogenes (strain ATCC 29543 / DSM 1740 / CCUG 13145 / JCM 31913 / LMG 7466 / NCTC 11488 / FDC 602W) (Vibrio succinogenes).